A 341-amino-acid chain; its full sequence is Ketol-acid reductoisomerase (NADP(+)) (341 aa).

The KARI N-terminal Rossmann domain occupies 2–181; that stretch reads AKVYYNGDAN…GAARAGVLET (180 aa). NADP(+) is bound by residues 25–28, R48, S52, and 82–85; these read YGSQ and DEKQ. Residue H107 is part of the active site. Position 133 (G133) interacts with NADP(+). In terms of domain architecture, KARI C-terminal knotted spans 182-327; that stretch reads TFKEETETDL…RELRSMMPFV (146 aa). D190, E194, E226, and E230 together coordinate Mg(2+). S251 provides a ligand contact to substrate.

The protein belongs to the ketol-acid reductoisomerase family. Mg(2+) is required as a cofactor.

It carries out the reaction (2R)-2,3-dihydroxy-3-methylbutanoate + NADP(+) = (2S)-2-acetolactate + NADPH + H(+). The catalysed reaction is (2R,3R)-2,3-dihydroxy-3-methylpentanoate + NADP(+) = (S)-2-ethyl-2-hydroxy-3-oxobutanoate + NADPH + H(+). It participates in amino-acid biosynthesis; L-isoleucine biosynthesis; L-isoleucine from 2-oxobutanoate: step 2/4. The protein operates within amino-acid biosynthesis; L-valine biosynthesis; L-valine from pyruvate: step 2/4. In terms of biological role, involved in the biosynthesis of branched-chain amino acids (BCAA). Catalyzes an alkyl-migration followed by a ketol-acid reduction of (S)-2-acetolactate (S2AL) to yield (R)-2,3-dihydroxy-isovalerate. In the isomerase reaction, S2AL is rearranged via a Mg-dependent methyl migration to produce 3-hydroxy-3-methyl-2-ketobutyrate (HMKB). In the reductase reaction, this 2-ketoacid undergoes a metal-dependent reduction by NADPH to yield (R)-2,3-dihydroxy-isovalerate. This chain is Ketol-acid reductoisomerase (NADP(+)), found in Geobacillus thermodenitrificans (strain NG80-2).